Reading from the N-terminus, the 325-residue chain is Tetraacyldisaccharide 4'-kinase (325 aa).

58 to 65 (TVGGSGKT) is a binding site for ATP.

The protein belongs to the LpxK family.

It catalyses the reaction a lipid A disaccharide + ATP = a lipid IVA + ADP + H(+). It participates in glycolipid biosynthesis; lipid IV(A) biosynthesis; lipid IV(A) from (3R)-3-hydroxytetradecanoyl-[acyl-carrier-protein] and UDP-N-acetyl-alpha-D-glucosamine: step 6/6. Transfers the gamma-phosphate of ATP to the 4'-position of a tetraacyldisaccharide 1-phosphate intermediate (termed DS-1-P) to form tetraacyldisaccharide 1,4'-bis-phosphate (lipid IVA). In Coxiella burnetii (strain RSA 331 / Henzerling II), this protein is Tetraacyldisaccharide 4'-kinase.